A 799-amino-acid chain; its full sequence is Elongation factor G, mitochondrial (799 aa).

Residues 1-34 constitute a mitochondrion transit peptide; sequence MRCPSLTRLPYRAVSGLPRSVVRLQSQNFLTRRC. The 288-residue stretch at 97–384 folds into the tr-type G domain; it reads SRVRNIGIAA…GVVDYLPNPA (288 aa). GTP-binding positions include 106-113, 182-186, and 236-239; these read AHIDSGKT, DTPGH, and NKMD.

This sequence belongs to the TRAFAC class translation factor GTPase superfamily. Classic translation factor GTPase family. EF-G/EF-2 subfamily.

Its subcellular location is the mitochondrion. It participates in protein biosynthesis; polypeptide chain elongation. Its function is as follows. Mitochondrial GTPase that catalyzes the GTP-dependent ribosomal translocation step during translation elongation. During this step, the ribosome changes from the pre-translocational (PRE) to the post-translocational (POST) state as the newly formed A-site-bound peptidyl-tRNA and P-site-bound deacylated tRNA move to the P and E sites, respectively. Catalyzes the coordinated movement of the two tRNA molecules, the mRNA and conformational changes in the ribosome. The polypeptide is Elongation factor G, mitochondrial (mef1) (Aspergillus flavus (strain ATCC 200026 / FGSC A1120 / IAM 13836 / NRRL 3357 / JCM 12722 / SRRC 167)).